Reading from the N-terminus, the 379-residue chain is Queuine tRNA-ribosyltransferase (379 aa).

Asp-94 serves as the catalytic Proton acceptor. Residues 94-98 (DSGGF), Asp-148, Gln-191, and Gly-218 each bind substrate. The segment at 249-255 (GVGSPDA) is RNA binding. Asp-268 functions as the Nucleophile in the catalytic mechanism. Residues 273–277 (TRIAR) are RNA binding; important for wobble base 34 recognition. Zn(2+) is bound by residues Cys-306, Cys-308, Cys-311, and His-337.

It belongs to the queuine tRNA-ribosyltransferase family. Homodimer. Within each dimer, one monomer is responsible for RNA recognition and catalysis, while the other monomer binds to the replacement base PreQ1. Requires Zn(2+) as cofactor.

The catalysed reaction is 7-aminomethyl-7-carbaguanine + guanosine(34) in tRNA = 7-aminomethyl-7-carbaguanosine(34) in tRNA + guanine. It participates in tRNA modification; tRNA-queuosine biosynthesis. Functionally, catalyzes the base-exchange of a guanine (G) residue with the queuine precursor 7-aminomethyl-7-deazaguanine (PreQ1) at position 34 (anticodon wobble position) in tRNAs with GU(N) anticodons (tRNA-Asp, -Asn, -His and -Tyr). Catalysis occurs through a double-displacement mechanism. The nucleophile active site attacks the C1' of nucleotide 34 to detach the guanine base from the RNA, forming a covalent enzyme-RNA intermediate. The proton acceptor active site deprotonates the incoming PreQ1, allowing a nucleophilic attack on the C1' of the ribose to form the product. After dissociation, two additional enzymatic reactions on the tRNA convert PreQ1 to queuine (Q), resulting in the hypermodified nucleoside queuosine (7-(((4,5-cis-dihydroxy-2-cyclopenten-1-yl)amino)methyl)-7-deazaguanosine). This is Queuine tRNA-ribosyltransferase from Staphylococcus epidermidis (strain ATCC 35984 / DSM 28319 / BCRC 17069 / CCUG 31568 / BM 3577 / RP62A).